The chain runs to 607 residues: Polypeptide N-acetylgalactosaminyltransferase 18 (607 aa).

Residues 1-12 (MVCTRKTKTLVS) are Cytoplasmic-facing. The chain crosses the membrane as a helical; Signal-anchor for type II membrane protein span at residues 13-35 (TCVILSGMTNIICLLYVGWVTNY). Residues 36-607 (IASVYVRGQE…ITNVLRSLAS (572 aa)) lie on the Lumenal side of the membrane. Disulfide bonds link C144–C377, C368–C447, C482–C498, C530–C543, and C571–C591. The N-linked (GlcNAc...) asparagine glycan is linked to N146. The tract at residues 153–267 (LPEVSIVFIF…VGWAEPVLTR (115 aa)) is catalytic subdomain A. D194 serves as a coordination point for substrate. N195 carries an N-linked (GlcNAc...) asparagine glycan. The Mn(2+) site is built by D251 and H253. A glycan (N-linked (GlcNAc...) asparagine) is linked at N320. The segment at 324-385 (PIRSPALIGC…PCSRIAHIER (62 aa)) is catalytic subdomain B. H382 contacts Mn(2+). Substrate is bound by residues R385 and Y390. In terms of domain architecture, Ricin B-type lectin spans 469-599 (AYGVLQNSLK…KCSGQHWSIT (131 aa)).

Belongs to the glycosyltransferase 2 family. GalNAc-T subfamily. Mn(2+) serves as cofactor.

Its subcellular location is the golgi apparatus membrane. It catalyses the reaction L-seryl-[protein] + UDP-N-acetyl-alpha-D-galactosamine = a 3-O-[N-acetyl-alpha-D-galactosaminyl]-L-seryl-[protein] + UDP + H(+). The enzyme catalyses L-threonyl-[protein] + UDP-N-acetyl-alpha-D-galactosamine = a 3-O-[N-acetyl-alpha-D-galactosaminyl]-L-threonyl-[protein] + UDP + H(+). The protein operates within protein modification; protein glycosylation. Its function is as follows. Catalyzes the initial reaction in O-linked oligosaccharide biosynthesis, the transfer of an N-acetyl-D-galactosamine (GalNAc) residue from UDP-GalNAc to a serine or threonine residue on the protein receptor. This is Polypeptide N-acetylgalactosaminyltransferase 18 (GALNT18) from Homo sapiens (Human).